The sequence spans 305 residues: Oxidoreductase swnR (305 aa).

This sequence belongs to the NmrA-type oxidoreductase family. Isoflavone reductase subfamily.

The catalysed reaction is L-pipecolate + O2 = L-1-piperideine-6-carboxylate + H2O2 + H(+). Its pathway is mycotoxin biosynthesis. Its function is as follows. Oxidoreductase; part of the gene cluster that mediates the biosynthesis of swainsonine (SW), a cytotoxic fungal alkaloid and a potential cancer therapy drug. Swainsonine production occurs via a multibranched pathway and is dispensable for fungal colonization of plants and infection of insect hosts. The first step of swainsonine biosynthesis is the production of the precursor pipecolic acid (PA) via conversion of L-lysine (Lys) to 1-piperideine-6-carboxylate (P6C) by the aminotransferase swnA, the latter being further reduced to PA by the reductase swnR. PA can be converted from lysine by both the SW biosynthetic cluster and the unclustered genes such as lysine cyclodeaminase. The PKS-NRPS hybrid synthetase swnK uptakes and condensates PA and malonyl-CoA with and without skipping of the ketoreductase (KR) domain in order to produce 3 intermediates, 1-oxoindolizidine, (1S)-1-hydroxyindolizin, and (1R)-1-hydroxyindolizine; with the transisomer (1S)-1-hydroxyindolizin being predominant. The terminal thioester reductase (TE) domain of swnK is involved in reduction of the thioester bond to release the intermediate aldehydes. The oxidoreductase swnN could contribute to the reduction of 1-oxoindolizidine to (1S)-1-hydroxyindolizin and (1R)-1-hydroxyindolizine, contributing to the major route of SW production. The dioxygenase swnH2 would be responsible for the oxidization of (1R)-1-hydroxyindolizine into (1R,2S)-1,2-dihydroxyindolizine and of (1S)-1-hydroxyindolizin to yield both (1R,2S)-1,2-dihydroxyindolizine and (1S,2S)-1,2-dihydroxyindolizine. The dioxygenase swnH1 then performs the conversion of the 1,2-dihydroxyindolizine epimers to SW. This is Oxidoreductase swnR from Metarhizium robertsii (strain ARSEF 23 / ATCC MYA-3075) (Metarhizium anisopliae (strain ARSEF 23)).